Consider the following 770-residue polypeptide: Serine/threonine-protein kinase PLK4 (770 aa).

Residues 14 to 267 (YEVQHLLGKG…LEHVLRHPFL (254 aa)) enclose the Protein kinase domain. Residues 20 to 28 (LGKGGFASV) and Lys-43 each bind ATP. Asp-138 acts as the Proton acceptor in catalysis. The 118-residue stretch at 383 to 500 (EERISVPPLN…DRFVGLVKSK (118 aa)) folds into the Cryptic POLO box 1 (CPB1) domain. The 104-residue stretch at 501–604 (TPKVTYFSAL…GRRPVTEVQP (104 aa)) folds into the Cryptic POLO box 2 (CPB2) domain. The POLO box domain maps to 662–741 (PIKRINLPDI…LPHIQLKLKT (80 aa)).

It belongs to the protein kinase superfamily. Ser/Thr protein kinase family. CDC5/Polo subfamily. As to quaternary structure, homodimer. Post-translationally, ubiquitinated by the SCF(Slimb) ubiquitin ligase complex; leading to its degradation by the proteasome during interphase and regulating centriole number and ensuring the block to centriole reduplication.

The protein localises to the cytoplasm. It is found in the cytoskeleton. Its subcellular location is the microtubule organizing center. The protein resides in the centrosome. It localises to the centriole. It carries out the reaction L-seryl-[protein] + ATP = O-phospho-L-seryl-[protein] + ADP + H(+). The enzyme catalyses L-threonyl-[protein] + ATP = O-phospho-L-threonyl-[protein] + ADP + H(+). In terms of biological role, serine/threonine-protein kinase that plays a central role in centriole duplication. Able to trigger procentriole formation on the surface of the mother centriole cylinder, using mother centriole as a platform, leading to the recruitment of centriole biogenesis proteins such as sas-6. When overexpressed, it is able to induce centrosome amplification through the simultaneous generation of multiple procentrioles adjoining each parental centriole during S phase. Centrosome amplification following overexpression can initiate tumorigenesis, highlighting the importance of centrosome regulation in cancers. This is Serine/threonine-protein kinase PLK4 (SAK) from Drosophila ananassae (Fruit fly).